Here is a 98-residue protein sequence, read N- to C-terminus: Pancreatic polypeptide prohormone (98 aa).

A signal peptide spans 1 to 29; it reads MAVAYYCLSLFLLSTWVALLLQPLQGAWG. Tyr65 carries the tyrosine amide modification.

Belongs to the NPY family. No icosapeptide-like peptide is cleaved from the C-terminal.

It is found in the secreted. Functionally, hormone secreted by pancreatic cells that acts as a regulator of pancreatic and gastrointestinal functions probably by signaling through the G protein-coupled receptor NPY4R2. This is Pancreatic polypeptide prohormone (Ppy) from Rattus norvegicus (Rat).